The chain runs to 425 residues: tRNA(Ile)-lysidine synthase (425 aa).

An ATP-binding site is contributed by 27-32 (SGGLDS).

This sequence belongs to the tRNA(Ile)-lysidine synthase family.

The protein resides in the cytoplasm. It catalyses the reaction cytidine(34) in tRNA(Ile2) + L-lysine + ATP = lysidine(34) in tRNA(Ile2) + AMP + diphosphate + H(+). In terms of biological role, ligates lysine onto the cytidine present at position 34 of the AUA codon-specific tRNA(Ile) that contains the anticodon CAU, in an ATP-dependent manner. Cytidine is converted to lysidine, thus changing the amino acid specificity of the tRNA from methionine to isoleucine. This is tRNA(Ile)-lysidine synthase from Streptococcus sanguinis (strain SK36).